A 333-amino-acid chain; its full sequence is BRISC and BRCA1-A complex member 1 (333 aa).

Met1 carries the post-translational modification N-acetylmethionine. Residues 1–85 (MEVAEANSPT…PWQVPASASE (85 aa)) form a disordered region. Ser8 bears the Phosphoserine mark. Over residues 10-24 (TEEEEEEEEEGEETI) the composition is skewed to acidic residues. Phosphoserine is present on residues Ser33 and Ser53. Residues 58 to 67 (EAATADGGAA) are compositionally biased toward low complexity. Residues 99–302 (VIICLDLSEE…LELHNCMAKL (204 aa)) form a VWFA-like region.

This sequence belongs to the BABAM1 family. As to quaternary structure, component of the ARISC complex, at least composed of UIMC1/RAP80, ABRAXAS1, BRCC3/BRCC36, BABAM2 and BABAM1/NBA1. Component of the BRCA1-A complex, at least composed of BRCA1, BARD1, UIMC1/RAP80, ABRAXAS1, BRCC3/BRCC36, BABAM2 and BABAM1/NBA1. In the BRCA1-A complex, interacts directly with ABRAXAS1 and BABAM2. Component of the BRISC complex, at least composed of ABRAXAS2, BRCC3/BRCC36, BABAM2 and BABAM1/NBA1. Identified in a complex with SHMT2 and the other subunits of the BRISC complex.

The protein resides in the cytoplasm. The protein localises to the nucleus. Component of the BRCA1-A complex, a complex that specifically recognizes 'Lys-63'-linked ubiquitinated histones H2A and H2AX at DNA lesions sites, leading to target the BRCA1-BARD1 heterodimer to sites of DNA damage at double-strand breaks (DSBs). The BRCA1-A complex also possesses deubiquitinase activity that specifically removes 'Lys-63'-linked ubiquitin on histones H2A and H2AX. In the BRCA1-A complex, it is required for the complex integrity and its localization at DSBs. Component of the BRISC complex, a multiprotein complex that specifically cleaves 'Lys-63'-linked ubiquitin in various substrates. In these 2 complexes, it is probably required to maintain the stability of BABAM2 and help the 'Lys-63'-linked deubiquitinase activity mediated by BRCC3/BRCC36 component. The BRISC complex is required for normal mitotic spindle assembly and microtubule attachment to kinetochores via its role in deubiquitinating NUMA1. Plays a role in interferon signaling via its role in the deubiquitination of the interferon receptor IFNAR1; deubiquitination increases IFNAR1 activity by enhancing its stability and cell surface expression. Down-regulates the response to bacterial lipopolysaccharide (LPS) via its role in IFNAR1 deubiquitination. The protein is BRISC and BRCA1-A complex member 1 (Babam1) of Mus musculus (Mouse).